The sequence spans 357 residues: Protein BIG GRAIN 1-like A (357 aa).

Disordered regions lie at residues 1–146 (MEIT…KELG) and 208–233 (SSTCSSASSFSRSCLSKTPSSSGKSK). A compositionally biased stretch (basic and acidic residues) spans 75–87 (DFERSRRKTDFLR). 2 stretches are compositionally biased toward low complexity: residues 88-104 (HSNSSSSDSSGFSSSES) and 112-127 (KSSASPPSSSRQQPKP). A compositionally biased stretch (polar residues) spans 129 to 139 (RTSSVDHSSAV). A compositionally biased stretch (low complexity) spans 208–223 (SSTCSSASSFSRSCLS).

It belongs to the BIG GRAIN 1 (BG1) plant protein family.

The protein resides in the cell membrane. Involved in auxin transport. Regulator of the auxin signaling pathway. In Arabidopsis thaliana (Mouse-ear cress), this protein is Protein BIG GRAIN 1-like A.